A 260-amino-acid chain; its full sequence is 3'-5' ssDNA/RNA exonuclease TatD (260 aa).

A divalent metal cation contacts are provided by Glu-91, His-127, and His-152.

Belongs to the metallo-dependent hydrolases superfamily. TatD-type hydrolase family. TatD subfamily. Monomer. Mg(2+) serves as cofactor.

The protein localises to the cytoplasm. Functionally, 3'-5' exonuclease that prefers single-stranded DNA and RNA. May play a role in the H(2)O(2)-induced DNA damage repair. This is 3'-5' ssDNA/RNA exonuclease TatD from Enterobacter lignolyticus (strain SCF1).